The chain runs to 595 residues: Neuroepithelial cell-transforming gene 1 protein (595 aa).

M1 is subject to N-acetylmethionine. Positions 1-42 (MEPEPAAQKQPRPRRRSRRVSMLSEEPAAGLPADTPGPAANE) are disordered. The segment at 1–74 (MEPEPAAQKQ…LKRKRREKDD (74 aa)) is necessary for nuclear localization. The short motif at 12 to 19 (RPRRRSRR) is the Nuclear localization signal element. Residue S21 is modified to Phosphoserine. Residues 66–72 (KRKRREK) carry the Nuclear localization signal motif. Phosphoserine is present on residues S100, S106, and S122. A disordered region spans residues 127–151 (GDHRSPASAQKSFSRSTVPTPTKRR). Residues 133–146 (ASAQKSFSRSTVPT) are compositionally biased toward polar residues. The region spanning 174–356 (KRQEAIYELS…QGVLSDINLK (183 aa)) is the DH domain. The 116-residue stretch at 386 to 501 (VLLCHGELKN…WFNCIRAAIA (116 aa)) folds into the PH domain. A Phosphoserine modification is found at S508. The segment at 555 to 595 (CGSSVQTVEDTRNMKAQRPQPGLRRARDKAQSGGKKKETLV) is disordered.

As to quaternary structure, interacts with RHOA in its GTP- and GDP-bound states, and with CDC42 in its GTP-bound state. Interacts with the PDZ 1 domain of BAIAP1.

The protein localises to the cytoplasm. It localises to the nucleus. Its function is as follows. Acts as a guanine nucleotide exchange factor (GEF) for RhoA GTPase. May be involved in activation of the SAPK/JNK pathway. Stimulates genotoxic stress-induced RHOB activity in breast cancer cells leading to their cell death. In Mus musculus (Mouse), this protein is Neuroepithelial cell-transforming gene 1 protein (Net1).